A 369-amino-acid polypeptide reads, in one-letter code: Mycofactocin maturase MftC (369 aa).

One can recognise a Radical SAM core domain in the interval 16 to 232 (LDAPICLTWE…KGERVLTGDS (217 aa)). Positions 30, 34, 37, 251, 258, 269, 310, 313, 319, 323, and 341 each coordinate [4Fe-4S] cluster. The segment at 347-369 (APALAQERHAPRPRVDHSRGSRE) is disordered. Positions 352–369 (QERHAPRPRVDHSRGSRE) are enriched in basic and acidic residues.

The protein belongs to the radical SAM superfamily. MftC family. As to quaternary structure, interacts with MftB. [4Fe-4S] cluster is required as a cofactor.

The catalysed reaction is [mycofactocin precursor peptide]-C-terminal glycyl-L-valyl-L-tyrosine + S-adenosyl-L-methionine = [mycofactocin precursor peptide]-C-terminal glycyl-N-{[2-(4-hydroxyphenyl)ethenyl]-3-methylbutanamide} + 5'-deoxyadenosine + L-methionine + CO2. It carries out the reaction [mycofactocin precursor peptide]-C-terminal glycyl-N-{[2-(4-hydroxyphenyl)ethenyl]-3-methylbutanamide} + AH2 + S-adenosyl-L-methionine = [mycofactocin precursor peptide]-C-terminal glycyl-N-{5-[(4-hydroxyphenyl)methyl]-4,4-dimethyl-2-oxopyrrolidin-3-yl}acetamide + 5'-deoxyadenosine + L-methionine + A + H(+). In terms of biological role, radical S-adenosylmethionine (SAM) enzyme responsible for the first step of the biosynthesis of the enzyme cofactor mycofactocin (MFT). Catalyzes two reactions at the C-terminus of the mycofactocin precursor (the MftA peptide). The first one is the oxidative decarboxylation of the C-terminal L-tyrosine of MftA, forming an unsaturated tyramine moiety. The second reaction is the cross-linking of the tyramine with the penultimate L-valine residue, forming a five-membered lactam ring. Its activity requires the presence of the MftB chaperone. The polypeptide is Mycofactocin maturase MftC (Mycobacterium ulcerans (strain Agy99)).